The following is a 130-amino-acid chain: Small ribosomal subunit protein uS9 (130 aa).

This sequence belongs to the universal ribosomal protein uS9 family.

The protein is Small ribosomal subunit protein uS9 of Serratia proteamaculans (strain 568).